The primary structure comprises 181 residues: Crossover junction endodeoxyribonuclease RuvC (181 aa).

Residues D7, E67, and D139 contribute to the active site. 3 residues coordinate Mg(2+): D7, E67, and D139.

It belongs to the RuvC family. As to quaternary structure, homodimer which binds Holliday junction (HJ) DNA. The HJ becomes 2-fold symmetrical on binding to RuvC with unstacked arms; it has a different conformation from HJ DNA in complex with RuvA. In the full resolvosome a probable DNA-RuvA(4)-RuvB(12)-RuvC(2) complex forms which resolves the HJ. Requires Mg(2+) as cofactor.

Its subcellular location is the cytoplasm. It carries out the reaction Endonucleolytic cleavage at a junction such as a reciprocal single-stranded crossover between two homologous DNA duplexes (Holliday junction).. Its function is as follows. The RuvA-RuvB-RuvC complex processes Holliday junction (HJ) DNA during genetic recombination and DNA repair. Endonuclease that resolves HJ intermediates. Cleaves cruciform DNA by making single-stranded nicks across the HJ at symmetrical positions within the homologous arms, yielding a 5'-phosphate and a 3'-hydroxyl group; requires a central core of homology in the junction. The consensus cleavage sequence is 5'-(A/T)TT(C/G)-3'. Cleavage occurs on the 3'-side of the TT dinucleotide at the point of strand exchange. HJ branch migration catalyzed by RuvA-RuvB allows RuvC to scan DNA until it finds its consensus sequence, where it cleaves and resolves the cruciform DNA. The chain is Crossover junction endodeoxyribonuclease RuvC from Cupriavidus pinatubonensis (strain JMP 134 / LMG 1197) (Cupriavidus necator (strain JMP 134)).